The sequence spans 298 residues: Golgi to ER traffic protein 2 (298 aa).

Over 1–164 (MSEPVVDTAE…LEYNTYNQKL (164 aa)) the chain is Cytoplasmic. Residues 40-92 (ILSQGSSVKTSGVKSVLDQEKEATPSHDEDPEIQDITEITTPPPRTPPIGEDA) are disordered. The span at 42–55 (SQGSSVKTSGVKSV) shows a compositional bias: low complexity. Basic and acidic residues predominate over residues 56-67 (LDQEKEATPSHD). The helical transmembrane segment at 165–185 (WKFRFLLVRVSVTLFNFFYHY) threads the bilayer. The Lumenal portion of the chain corresponds to 186–211 (INLSNFHASNYAYVRDLSSEKYPVRD). Residues 212–231 (FFTWFATTEVVLVAAYYSIF) traverse the membrane as a helical segment. Residues 232–275 (HSLGLFHAANQNSFVLKAMSMGSMVLPQLEHYKPLVARFLGYYE) lie on the Cytoplasmic side of the membrane. Residues 276-296 (LLGIVLGDLSLVIVLFGLLSF) form a helical membrane-spanning segment. Over 297 to 298 (AN) the chain is Lumenal.

Belongs to the GET2 family. Component of the Golgi to ER traffic (GET) complex, which is composed of GET1, GET2 and GET3. Within the complex, GET1 and GET2 form a heterotetramer which is stabilized by phosphatidylinositol binding and which binds to the GET3 homodimer.

The protein resides in the endoplasmic reticulum membrane. Its subcellular location is the golgi apparatus membrane. Functionally, required for the post-translational delivery of tail-anchored (TA) proteins to the endoplasmic reticulum. Together with GET1, acts as a membrane receptor for soluble GET3, which recognizes and selectively binds the transmembrane domain of TA proteins in the cytosol. The GET complex cooperates with the HDEL receptor ERD2 to mediate the ATP-dependent retrieval of resident ER proteins that contain a C-terminal H-D-E-L retention signal from the Golgi to the ER. This is Golgi to ER traffic protein 2 from Candida albicans (strain SC5314 / ATCC MYA-2876) (Yeast).